A 367-amino-acid chain; its full sequence is Nociceptin receptor (367 aa).

At M1–L45 the chain is on the extracellular side. N21, N26, and N36 each carry an N-linked (GlcNAc...) asparagine glycan. The chain crosses the membrane as a helical span at residues G46 to Y71. The Cytoplasmic segment spans residues V72–N84. A helical transmembrane segment spans residues I85–T106. Over D107–K121 the chain is Extracellular. C120 and C197 form a disulfide bridge. Residues T122–V143 traverse the membrane as a helical segment. Residues D144–S162 lie on the Cytoplasmic side of the membrane. The chain crosses the membrane as a helical span at residues K163–M185. Residues G186–W208 are Extracellular-facing. The helical transmembrane segment at G209–S233 threads the bilayer. The Cytoplasmic portion of the chain corresponds to L234–L261. Residues V262–V282 form a helical membrane-spanning segment. The Extracellular portion of the chain corresponds to Q283 to I297. The helical transmembrane segment at L298–L319 threads the bilayer. At D320–A367 the chain is on the cytoplasmic side. A lipid anchor (S-palmitoyl cysteine) is attached at C331.

This sequence belongs to the G-protein coupled receptor 1 family. Phosphorylation at Ser-360 requires GRK3. In the brain, isoform KOR3 and isoform KOR3C are most abundant in hypothalamus and periaqueductal gray. Isoform KOR3A is highly expressed in cortex, striatum and brainstem. Isoform KOR3D is highly expressed in cerebellum, hypothalamus and brainstem. Detected in spleen lymphocytes.

Its subcellular location is the cell membrane. It localises to the cytoplasmic vesicle. G-protein coupled opioid receptor that functions as a receptor for the endogenous neuropeptide nociceptin. Ligand binding causes a conformation change that triggers signaling via guanine nucleotide-binding proteins (G proteins) and modulates the activity of down-stream effectors. Signaling via G proteins mediates inhibition of adenylate cyclase activity and calcium channel activity. Arrestins modulate signaling via G proteins and mediate the activation of alternative signaling pathways that lead to the activation of MAP kinases. Plays a role in modulating nociception and the perception of pain. Plays a role in the regulation of locomotor activity by the neuropeptide nociceptin. This is Nociceptin receptor (Oprl1) from Mus musculus (Mouse).